The following is a 557-amino-acid chain: Urocanate hydratase (557 aa).

NAD(+) contacts are provided by residues 52 to 53, Gln-130, 176 to 178, Glu-196, 242 to 243, 263 to 267, 273 to 274, and Tyr-322; these read GG, GMG, NA, QTSAH, and YL. Cys-410 is a catalytic residue. An NAD(+)-binding site is contributed by Gly-492.

It belongs to the urocanase family. It depends on NAD(+) as a cofactor.

It localises to the cytoplasm. The enzyme catalyses 4-imidazolone-5-propanoate = trans-urocanate + H2O. Its pathway is amino-acid degradation; L-histidine degradation into L-glutamate; N-formimidoyl-L-glutamate from L-histidine: step 2/3. Functionally, catalyzes the conversion of urocanate to 4-imidazolone-5-propionate. This Rhizobium meliloti (strain 1021) (Ensifer meliloti) protein is Urocanate hydratase.